The following is a 38-amino-acid chain: Photosystem II reaction center protein L (38 aa).

Residues serine 17–phenylalanine 37 form a helical membrane-spanning segment.

This sequence belongs to the PsbL family. In terms of assembly, PSII is composed of 1 copy each of membrane proteins PsbA, PsbB, PsbC, PsbD, PsbE, PsbF, PsbH, PsbI, PsbJ, PsbK, PsbL, PsbM, PsbT, PsbX, PsbY, PsbZ, Psb30/Ycf12, at least 3 peripheral proteins of the oxygen-evolving complex and a large number of cofactors. It forms dimeric complexes.

It is found in the plastid. The protein resides in the chloroplast thylakoid membrane. Its function is as follows. One of the components of the core complex of photosystem II (PSII). PSII is a light-driven water:plastoquinone oxidoreductase that uses light energy to abstract electrons from H(2)O, generating O(2) and a proton gradient subsequently used for ATP formation. It consists of a core antenna complex that captures photons, and an electron transfer chain that converts photonic excitation into a charge separation. This subunit is found at the monomer-monomer interface and is required for correct PSII assembly and/or dimerization. The chain is Photosystem II reaction center protein L from Thalassiosira pseudonana (Marine diatom).